Consider the following 375-residue polypeptide: Ferredoxin--NADP reductase, root-type isozyme, chloroplastic (375 aa).

The N-terminal 60 residues, 1–60 (MAHSALSQVSVAVPLQTDSSFRRSTFKATSITFSDRSSWISMPPIDLKAAPSRNQHIVCM), are a transit peptide targeting the chloroplast. The region spanning 91–219 (KEPYTATIVS…TGPSGKIMLL (129 aa)) is the FAD-binding FR-type domain. FAD is bound by residues 151-154 (RLYL), 172-174 (CVR), tyrosine 178, 193-195 (VCS), and threonine 235. Arginine 174 serves as a coordination point for NADP(+). Residues threonine 235, 266-267 (VA), 296-297 (SR), lysine 306, 334-335 (GL), and glutamate 373 contribute to the NADP(+) site.

This sequence belongs to the ferredoxin--NADP reductase type 1 family. FAD is required as a cofactor.

The protein localises to the plastid. Its subcellular location is the chloroplast. It carries out the reaction 2 reduced [2Fe-2S]-[ferredoxin] + NADP(+) + H(+) = 2 oxidized [2Fe-2S]-[ferredoxin] + NADPH. Its pathway is energy metabolism; photosynthesis. In terms of biological role, may play a key role in regulating the relative amounts of cyclic and non-cyclic electron flow to meet the demands of the plant for ATP and reducing power. Is involved in nitrate assimilation. This Nicotiana tabacum (Common tobacco) protein is Ferredoxin--NADP reductase, root-type isozyme, chloroplastic.